A 525-amino-acid polypeptide reads, in one-letter code: Zinc finger C2HC domain-containing protein 1C (525 aa).

The span at 23-34 (AHGLHSAKHDPY) shows a compositional bias: basic and acidic residues. Disordered stretches follow at residues 23–48 (AHGL…MGHL), 85–107 (CPHS…GKGL), and 145–171 (VHRK…PDSS). Polar residues predominate over residues 36–48 (QSDSPQRSSMGHL). The span at 90–102 (GISQQGSGNNAQG) shows a compositional bias: low complexity. A coiled-coil region spans residues 207-252 (TQIQRLEAAGESLQKEIRRKEILLREKLKKTEEGLRRIQREKKQAI). 3 disordered regions span residues 292-316 (SRNR…LSDY), 330-349 (NNKI…SQPA), and 356-379 (LQAS…EQEL). The span at 301–312 (CEQAQENSSPLQ) shows a compositional bias: polar residues. A compositionally biased stretch (low complexity) spans 359–373 (SSLSGTPGSSGSSSS). C2HC/C3H-type zinc fingers lie at residues 378–407 (ELGK…MQGS) and 487–516 (DYVQ…IKNR). Positions 382, 385, 397, 401, 491, 494, 506, and 510 each coordinate Zn(2+).

The protein belongs to the ZC2HC1 family. Requires Zn(2+) as cofactor.

In Rattus norvegicus (Rat), this protein is Zinc finger C2HC domain-containing protein 1C (Zc2hc1c).